The chain runs to 152 residues: Transcriptional regulator MraZ (152 aa).

SpoVT-AbrB domains follow at residues Ala5–Glu52 and Ala81–Thr124.

The protein belongs to the MraZ family. Forms oligomers.

The protein localises to the cytoplasm. Its subcellular location is the nucleoid. Its function is as follows. Negatively regulates its own expression and that of the subsequent genes in the proximal part of the division and cell wall (dcw) gene cluster. Acts by binding directly to DNA. May also regulate the expression of genes outside the dcw cluster. This is Transcriptional regulator MraZ from Enterobacter sp. (strain 638).